Here is a 566-residue protein sequence, read N- to C-terminus: Sodium-dependent high-affinity dicarboxylate transporter 3 (566 aa).

The next 12 helical transmembrane spans lie at 55–75 (LVLVLTPLFFGQMLNWEGPEW), 92–112 (VMPLAVTAMLPVVLFPLVGVL), 123–139 (NDTNFLFIGGLIMAAAV), 162–182 (WIMLGFMTVTALLSSFISNTA), 219–239 (MATGLVLSICFAANIGGTGTA), 268–288 (WIFFAYPLMLLCLFVAWMTLV), 329–349 (ILLSLWVFRNPGVVPGFGVFF), 352–372 (GAYTDATSAMIVAFLLFVLPS), 400–420 (ETFPWSVVLLLGGGFALAAGV), 439–459 (LPLWILQLLTMLIAMVITNIC), 496–516 (FAFIFPVGTPPNAIVFGSGMV), and 521–541 (MAFVGGIISLELLVLTVLYMN).

The protein belongs to the SLC13A/DASS transporter (TC 2.A.47) family. NADC subfamily. Nad-1 and nad-2 are coexpressed in the intestinal tract from early larvae to adults, expression is from the pharynx through to the anus. Expression level is significantly greater in the anterior half of the intestine than in the posterior half.

The protein localises to the membrane. Its function is as follows. High-affinity sodium-dicarboxylate cotransporter that accepts a range of tricarboxylic acid-cycle intermediates with 4-5 carbon atoms. There is no interaction with monocarboxylates. Plays a role in the regulation of life span. The chain is Sodium-dependent high-affinity dicarboxylate transporter 3 (nac-3) from Caenorhabditis elegans.